A 504-amino-acid polypeptide reads, in one-letter code: 26S proteasome non-ATPase regulatory subunit 5 (504 aa).

An N-acetylalanine modification is found at Ala-2.

The protein belongs to the proteasome subunit S5B/HSM3 family. In terms of assembly, interacts with PSMC1, PSMC2, PSMD1 and PSMD6. Part of transient complex containing PSMD5, PSMC2, PSMC1 and PSMD2 formed during the assembly of the 26S proteasome.

In terms of biological role, acts as a chaperone during the assembly of the 26S proteasome, specifically of the base subcomplex of the PA700/19S regulatory complex (RC). In the initial step of the base subcomplex assembly is part of an intermediate PSMD5:PSMC2:PSMC1:PSMD2 module which probably assembles with a PSMD10:PSMC4:PSMC5:PAAF1 module followed by dissociation of PSMD5. This chain is 26S proteasome non-ATPase regulatory subunit 5 (PSMD5), found in Homo sapiens (Human).